A 537-amino-acid polypeptide reads, in one-letter code: Apolipoprotein N-acyltransferase (537 aa).

6 helical membrane-spanning segments follow: residues 10-30, 37-57, 76-96, 107-127, 181-201, and 210-230; these read IALA…ITAG, LAPF…VWLI, YWFG…AFFV, FAVL…FALA, IGLW…ATLI, and AWRA…FGAI. Positions 248-501 constitute a CN hydrolase domain; sequence MQPNLQQDAK…EGILDASLPA (254 aa). The Proton acceptor role is filled by E295. Residue K360 is part of the active site. The Nucleophile role is filled by C413. A helical transmembrane segment spans residues 507–527; the sequence is IYARVGDVPAAVLVALAVLLA.

The protein belongs to the CN hydrolase family. Apolipoprotein N-acyltransferase subfamily.

Its subcellular location is the cell inner membrane. It catalyses the reaction N-terminal S-1,2-diacyl-sn-glyceryl-L-cysteinyl-[lipoprotein] + a glycerophospholipid = N-acyl-S-1,2-diacyl-sn-glyceryl-L-cysteinyl-[lipoprotein] + a 2-acyl-sn-glycero-3-phospholipid + H(+). The protein operates within protein modification; lipoprotein biosynthesis (N-acyl transfer). Functionally, catalyzes the phospholipid dependent N-acylation of the N-terminal cysteine of apolipoprotein, the last step in lipoprotein maturation. The protein is Apolipoprotein N-acyltransferase of Bradyrhizobium diazoefficiens (strain JCM 10833 / BCRC 13528 / IAM 13628 / NBRC 14792 / USDA 110).